The sequence spans 141 residues: Large ribosomal subunit protein uL11 (141 aa).

It belongs to the universal ribosomal protein uL11 family. Part of the ribosomal stalk of the 50S ribosomal subunit. Interacts with L10 and the large rRNA to form the base of the stalk. L10 forms an elongated spine to which L12 dimers bind in a sequential fashion forming a multimeric L10(L12)X complex. In terms of processing, one or more lysine residues are methylated.

Forms part of the ribosomal stalk which helps the ribosome interact with GTP-bound translation factors. This chain is Large ribosomal subunit protein uL11, found in Thermosipho africanus (strain TCF52B).